A 227-amino-acid polypeptide reads, in one-letter code: Cytidylate kinase (227 aa).

Position 12-20 (12-20) interacts with ATP; that stretch reads GPSGAGKGT.

It belongs to the cytidylate kinase family. Type 1 subfamily.

Its subcellular location is the cytoplasm. The catalysed reaction is CMP + ATP = CDP + ADP. The enzyme catalyses dCMP + ATP = dCDP + ADP. The sequence is that of Cytidylate kinase from Erwinia tasmaniensis (strain DSM 17950 / CFBP 7177 / CIP 109463 / NCPPB 4357 / Et1/99).